The primary structure comprises 699 residues: SPS-sensor serine protease component SSY5 (699 aa).

Disordered stretches follow at residues methionine 1–phenylalanine 113 and proline 128–arginine 158. A propeptide spanning residues methionine 1–alanine 381 is cleaved from the precursor. The span at asparagine 24–glycine 38 shows a compositional bias: polar residues. A compositionally biased stretch (basic and acidic residues) spans asparagine 39–asparagine 51. The span at serine 61–arginine 78 shows a compositional bias: low complexity. Residues threonine 83–glutamate 93 are compositionally biased toward polar residues. 2 stretches are compositionally biased toward low complexity: residues histidine 97–asparagine 109 and serine 144–serine 154. The interval phenylalanine 459–glycine 699 is serine protease. Residues histidine 465, aspartate 545, and serine 640 each act as charge relay system in the active site.

The protein belongs to the peptidase S64 family. Component of the plasma membrane SPS (SSY1-PTR3-SSY5) amino acid sensor complex. Post-translationally, the propeptide is autoproteolytically cleaved from the catalytic domain but remains associated, forming an inactive protease complex. This processing occurs even in the absence of signaling.

The protein resides in the cell membrane. Functionally, protease component of the SPS-sensor system, which regulates the expression of several amino acid-metabolizing enzymes and amino acid- and peptide-permeases in response to extracellular amino acid levels by controlling the activity of two transcription factors, STP1 and STP2. Catalyzes the activation of these transcription factors, which are synthesized as latent cytoplasmic precursors, by proteolytic removal of an N-terminal inhibitory domain containing cytoplasmic retention motifs. SSY5 binds as an inactive protease complex to STP1. In response to extracellular amino acids and dependent on the other SPS-sensor components, the inhibitory propeptide is induced to dissociate, and thereby enables the catalytic domain to process STP1. The polypeptide is SPS-sensor serine protease component SSY5 (SSY5) (Saccharomyces cerevisiae (strain ATCC 204508 / S288c) (Baker's yeast)).